Consider the following 365-residue polypeptide: N5-carboxyaminoimidazole ribonucleotide synthase (365 aa).

Residues arginine 102, lysine 143, 148 to 154 (GYDGKGQ), 177 to 180 (EEYV), glutamate 185, and 256 to 257 (NE) contribute to the ATP site. The ATP-grasp domain occupies 106-286 (KLFYRQHNLP…QFEQHLRAII (181 aa)).

The protein belongs to the PurK/PurT family. Homodimer.

The enzyme catalyses 5-amino-1-(5-phospho-beta-D-ribosyl)imidazole + hydrogencarbonate + ATP = 5-carboxyamino-1-(5-phospho-D-ribosyl)imidazole + ADP + phosphate + 2 H(+). The protein operates within purine metabolism; IMP biosynthesis via de novo pathway; 5-amino-1-(5-phospho-D-ribosyl)imidazole-4-carboxylate from 5-amino-1-(5-phospho-D-ribosyl)imidazole (N5-CAIR route): step 1/2. Catalyzes the ATP-dependent conversion of 5-aminoimidazole ribonucleotide (AIR) and HCO(3)(-) to N5-carboxyaminoimidazole ribonucleotide (N5-CAIR). In Saccharolobus solfataricus (strain ATCC 35092 / DSM 1617 / JCM 11322 / P2) (Sulfolobus solfataricus), this protein is N5-carboxyaminoimidazole ribonucleotide synthase.